The following is a 917-amino-acid chain: Transcription factor E2F8 (917 aa).

A disordered region spans residues 1-122 (MSSTLSEGQT…TEQGEEVEKL (122 aa)). Composition is skewed to polar residues over residues 16–27 (LSPSKATSTNNK) and 37–48 (PLKNSNKASTSE). The segment covering 93 to 103 (IRNREKERAVD) has biased composition (basic and acidic residues). Acidic residues predominate over residues 105-117 (SESENSQETEQGE). A DNA-binding region spans residues 126 to 195 (RKDKSLGLLC…LAKNRYTWHG (70 aa)). 6 disordered regions span residues 221 to 252 (QIRQRSQEREEREFDLDGEEKENEEMSSFEVD), 353 to 386 (PAFKWTGPEDIPSPKDLEISTTSSAPKPLESRSS), 461 to 497 (EQSADGRPNNAVTDSSQSSKQPESTSASNHGPPGMQI), 556 to 615 (VGAN…SVSP), 671 to 698 (LEKEEKSQTSDNEAGLTPVRQPHSQPQK), and 813 to 834 (GSVTPNPHTPEQSSSLQSPHPG). The segment covering 233–252 (EFDLDGEEKENEEMSSFEVD) has biased composition (acidic residues). The DNA-binding element occupies 273–359 (RKDKSLRVMS…GRKPAFKWTG (87 aa)). Residues 371 to 386 (ISTTSSAPKPLESRSS) show a composition bias toward polar residues. Low complexity-rich tracts occupy residues 475–488 (SSQSSKQPESTSAS) and 568–578 (TSNNQTNQSSS). Positions 595-605 (EKSSVGSPSKM) are enriched in polar residues. The segment covering 815 to 830 (VTPNPHTPEQSSSLQS) has biased composition (polar residues).

The protein belongs to the E2F/DP family. In terms of assembly, homodimer and heterodimer: mainly forms homodimers and, to a lesser extent, heterodimers with e2f7.

The protein resides in the nucleus. Functionally, atypical E2F transcription factor that participates in various processes such as angiogenesis and polyploidization of specialized cells. Mainly acts as a transcription repressor that binds DNA independently of DP proteins and specifically recognizes the E2 recognition site 5'-TTTC[CG]CGC-3'. Directly represses transcription of classical E2F transcription factors such as e2f1. Acts as a regulator of S-phase by recognizing and binding the E2-related site 5'-TTCCCGCC-3' and mediating repression of G1/S-regulated genes. Acts as a promoter of sprouting angiogenesis, possibly by acting as a transcription activator and promoting expression of vegfa. The protein is Transcription factor E2F8 (e2f8) of Danio rerio (Zebrafish).